The sequence spans 207 residues: Urease accessory protein UreE (207 aa).

The interval 171–207 is disordered; the sequence is HHGHAHSHSHSHDHDHDHDHDHQHGPGCAHGHGHDHH. A compositionally biased stretch (basic and acidic residues) spans 180 to 194; that stretch reads HSHDHDHDHDHDHQH.

This sequence belongs to the UreE family.

Its subcellular location is the cytoplasm. Its function is as follows. Involved in urease metallocenter assembly. Binds nickel. Probably functions as a nickel donor during metallocenter assembly. The polypeptide is Urease accessory protein UreE (Burkholderia lata (strain ATCC 17760 / DSM 23089 / LMG 22485 / NCIMB 9086 / R18194 / 383)).